We begin with the raw amino-acid sequence, 350 residues long: Hydroxymethylglutaryl-CoA synthase (350 aa).

(3S)-3-hydroxy-3-methylglutaryl-CoA is bound at residue Asp-30. Residue Glu-82 is the Proton donor/acceptor of the active site. Residues Cys-114, Ser-155, Thr-203, and His-236 each contribute to the (3S)-3-hydroxy-3-methylglutaryl-CoA site. The Acyl-thioester intermediate role is filled by Cys-114. Catalysis depends on His-236, which acts as the Proton donor/acceptor. Arg-241 serves as a coordination point for CoA. Residues Arg-245, Asn-268, and Ser-298 each contribute to the (3S)-3-hydroxy-3-methylglutaryl-CoA site.

It belongs to the thiolase-like superfamily. Archaeal HMG-CoA synthase family. As to quaternary structure, interacts with acetoacetyl-CoA thiolase that catalyzes the precedent step in the pathway and with a DUF35 protein. The acetoacetyl-CoA thiolase/HMG-CoA synthase complex channels the intermediate via a fused CoA-binding site, which allows for efficient coupling of the endergonic thiolase reaction with the exergonic HMGCS reaction.

The catalysed reaction is acetoacetyl-CoA + acetyl-CoA + H2O = (3S)-3-hydroxy-3-methylglutaryl-CoA + CoA + H(+). The protein operates within metabolic intermediate biosynthesis; (R)-mevalonate biosynthesis; (R)-mevalonate from acetyl-CoA: step 2/3. Its function is as follows. Catalyzes the condensation of acetyl-CoA with acetoacetyl-CoA to form 3-hydroxy-3-methylglutaryl-CoA (HMG-CoA). Functions in the mevalonate (MVA) pathway leading to isopentenyl diphosphate (IPP), a key precursor for the biosynthesis of isoprenoid compounds that are building blocks of archaeal membrane lipids. The chain is Hydroxymethylglutaryl-CoA synthase from Pyrobaculum calidifontis (strain DSM 21063 / JCM 11548 / VA1).